Reading from the N-terminus, the 475-residue chain is MSPQTETKAGVGFKAGVKDYRLTYYTPDYETKDTDILAAFRMTPQPGVPAEEAGNAVAAESSTGTWTTVWTDGLTNLDRYKGRCYDIDPVPGEENQYIAYVAYPLDLFEEGSVTNMFTSIVGNVFGFKALRALRLEDLRIPPAYTKTFQGPPHGIQVERDKLNKYGRPLLGCTIKPKLGLSAKNYGRAVYECLRGGLDFTKDDENVNSQPFMRWRDRFLFVAEAIYKSQAETGEIKGHYLNATAGTCEEMLKRAACARELGVPIVMHDYLTGGFTANTSLAFYCRDNGLLLHIHRAMHAVIDRQKNHGIHFRVLAKALRMSGGDHIHAGTVVGKLEGDRQVTLGFVDLLRDDYIEKDRSRGIYFTQDWVSLPGVFPVASGGIHVWHMPALTEIFGDDSVLQFGGGTLGHPWGNAPGAVANRVSLEACVQARNEGRDLAREGNEIIREACKWSPELSAACEIWKEIKFEFDIIDTL.

Residues 1–2 (MS) constitute a propeptide that is removed on maturation. Pro-3 is modified (N-acetylproline). Lys-14 carries the post-translational modification N6,N6,N6-trimethyllysine. Substrate-binding residues include Asn-123 and Thr-173. Residue Lys-175 is the Proton acceptor of the active site. A substrate-binding site is contributed by Lys-177. Mg(2+) is bound by residues Lys-201, Asp-203, and Glu-204. N6-carboxylysine is present on Lys-201. Residue His-294 is the Proton acceptor of the active site. Residues Arg-295, His-327, and Ser-379 each contribute to the substrate site.

This sequence belongs to the RuBisCO large chain family. Type I subfamily. In terms of assembly, heterohexadecamer of 8 large chains and 8 small chains; disulfide-linked. The disulfide link is formed within the large subunit homodimers. Mg(2+) serves as cofactor. In terms of processing, the disulfide bond which can form in the large chain dimeric partners within the hexadecamer appears to be associated with oxidative stress and protein turnover.

The protein resides in the plastid. The protein localises to the chloroplast. The catalysed reaction is 2 (2R)-3-phosphoglycerate + 2 H(+) = D-ribulose 1,5-bisphosphate + CO2 + H2O. It catalyses the reaction D-ribulose 1,5-bisphosphate + O2 = 2-phosphoglycolate + (2R)-3-phosphoglycerate + 2 H(+). Its function is as follows. RuBisCO catalyzes two reactions: the carboxylation of D-ribulose 1,5-bisphosphate, the primary event in carbon dioxide fixation, as well as the oxidative fragmentation of the pentose substrate in the photorespiration process. Both reactions occur simultaneously and in competition at the same active site. The polypeptide is Ribulose bisphosphate carboxylase large chain (rbcL) (Marchantia polymorpha (Common liverwort)).